The following is a 249-amino-acid chain: Chitooligosaccharide deacetylase (249 aa).

Mg(2+) is bound by residues histidine 61 and histidine 125.

Belongs to the YdjC deacetylase family. ChbG subfamily. As to quaternary structure, homodimer. The cofactor is Mg(2+).

It is found in the cytoplasm. The enzyme catalyses N,N'-diacetylchitobiose + H2O = N-acetyl-beta-D-glucosaminyl-(1-&gt;4)-D-glucosamine + acetate. It carries out the reaction diacetylchitobiose-6'-phosphate + H2O = N'-monoacetylchitobiose-6'-phosphate + acetate. Its pathway is glycan degradation; chitin degradation. Involved in the degradation of chitin. ChbG is essential for growth on the acetylated chitooligosaccharides chitobiose and chitotriose but is dispensable for growth on cellobiose and chitosan dimer, the deacetylated form of chitobiose. Deacetylation of chitobiose-6-P and chitotriose-6-P is necessary for both the activation of the chb promoter by the regulatory protein ChbR and the hydrolysis of phosphorylated beta-glucosides by the phospho-beta-glucosidase ChbF. Catalyzes the removal of only one acetyl group from chitobiose-6-P to yield monoacetylchitobiose-6-P, the inducer of ChbR and the substrate of ChbF. This Escherichia coli O9:H4 (strain HS) protein is Chitooligosaccharide deacetylase.